Consider the following 636-residue polypeptide: ATP-dependent zinc metalloprotease FtsH 1 (636 aa).

At 1 to 18 the chain is on the cytoplasmic side; that stretch reads MKLSPPKKNLPPQKNNEP. The helical transmembrane segment at 19 to 39 threads the bilayer; sequence PFPYLRLLVQVGIALFLVWIW. Over 40 to 126 the chain is Periplasmic; the sequence is QESLHKATVS…YGSVKPSLLS (87 aa). A helical membrane pass occupies residues 127–147; the sequence is QILFSWVVPILIFFLVWFALA. Residues 148–636 lie on the Cytoplasmic side of the membrane; the sequence is RFMGGGGAGY…KEAPSYSSTL (489 aa). Position 220-227 (220-227) interacts with ATP; the sequence is GPPGTGKT. Residue His-442 coordinates Zn(2+). The active site involves Glu-443. His-446 and Asp-519 together coordinate Zn(2+).

It in the central section; belongs to the AAA ATPase family. The protein in the C-terminal section; belongs to the peptidase M41 family. Homohexamer. Requires Zn(2+) as cofactor.

The protein localises to the cell inner membrane. Acts as a processive, ATP-dependent zinc metallopeptidase for both cytoplasmic and membrane proteins. Plays a role in the quality control of integral membrane proteins. The sequence is that of ATP-dependent zinc metalloprotease FtsH 1 from Methylacidiphilum infernorum (isolate V4) (Methylokorus infernorum (strain V4)).